The primary structure comprises 92 residues: Alpha-conotoxin-like Mi20.2 (92 aa).

The N-terminal stretch at 1-24 (MPKLEMMLLVLLILPLSSFSAAGE) is a signal peptide. The propeptide occupies 25–45 (QVVQGDQRSDGLARYLQRGGR). Glu49 bears the 4-carboxyglutamate mark. Position 55 is a 4-hydroxyproline (Pro55). 4 disulfide bridges follow: Cys63/Cys72, Cys68/Cys80, Cys73/Cys90, and Cys78/Cys92.

Belongs to the conotoxin D superfamily. In terms of assembly, hetero-, homo- or pseudo-homodimer (identical sequence, different post-translational modifications). In terms of tissue distribution, expressed by the venom duct.

It is found in the secreted. In terms of biological role, alpha-conotoxins act on postsynaptic membranes, they bind to the nicotinic acetylcholine receptors (nAChR) and thus inhibit them. Through its two C-terminal domains, this homodimeric protein would bind to two nAChR allosteric sites, located outside the nAChR C-loop of the principal binding face and at the adjacent binding interface in a clockwise direction. This toxin specifically blocks mammalian neuronal nAChR of the alpha-7/CHRNA7, alpha-3-beta-2/CHRNA3-CHRNB2 and alpha-4-beta-2/CHRNA4-CHRNB2 subtypes. In Conus miles (Soldier cone), this protein is Alpha-conotoxin-like Mi20.2.